Consider the following 297-residue polypeptide: Esterase LipU (297 aa).

Catalysis depends on residues S140, E239, and H269.

It belongs to the 'GDXG' lipolytic enzyme family.

It is found in the secreted. The enzyme catalyses a fatty acid ester + H2O = an aliphatic alcohol + a fatty acid + H(+). It carries out the reaction a butanoate ester + H2O = an aliphatic alcohol + butanoate + H(+). The catalysed reaction is an acetyl ester + H2O = an aliphatic alcohol + acetate + H(+). It catalyses the reaction decanoate ester + H2O = decanoate + an aliphatic alcohol + H(+). The enzyme catalyses an octanoate ester + H2O = an aliphatic alcohol + octanoate + H(+). It carries out the reaction a dodecanoate ester + H2O = an aliphatic alcohol + dodecanoate + H(+). The catalysed reaction is hexadecanoate ester + H2O = an aliphatic alcohol + hexadecanoate + H(+). With respect to regulation, inhibited by the ionic detergent SDS and by the serine protease inhibitor PMSF. Inhibited by the FDA approved drugs Diosmin, Acarbose and Ouabain. These drugs remain bound in the active site pocket and could be probable drug candidates to combat TB disease. Functionally, esterase that shows preference for short chain fatty acids. Contributes to the growth of M.tuberculosis during the nutritive stress. Elicits strong humoral response in both extrapulmonary and relapsed cases of tuberculosis patients. This is Esterase LipU from Mycobacterium tuberculosis (strain ATCC 25618 / H37Rv).